Reading from the N-terminus, the 529-residue chain is Transcription factor BIM1 (529 aa).

Disordered stretches follow at residues 1–91 (MELP…HVLP), 245–291 (KKES…RRSK), 425–450 (RVASSEAVEPSPSSRSQKEEEDEEVL), and 491–529 (AKQSSSSSFKDHEVREPVSRTRNDNVKQTRKPKRLKTGQ). The span at 76–86 (KPPPPAPPPPL) shows a compositional bias: pro residues. Composition is skewed to basic and acidic residues over residues 255-265 (HRVDLRVKADV) and 282-291 (SATEQRRRSK). One can recognise a bHLH domain in the interval 276–326 (TPRSKHSATEQRRRSKINDRFQMLRQLIPNSDQKRDKASFLLEVIEYIQFL). The span at 426-438 (VASSEAVEPSPSS) shows a compositional bias: low complexity. Over residues 499–517 (FKDHEVREPVSRTRNDNVK) the composition is skewed to basic and acidic residues. The span at 518–529 (QTRKPKRLKTGQ) shows a compositional bias: basic residues.

Homodimer. Interacts with BZR2/BES1 through both C-terminal and bHLH domains. Also interacts with LHW. Expressed constitutively in roots.

It is found in the nucleus. Positive brassinosteroid-signaling protein. Transcription factor that bind specifically to the DNA sequence 5'-CANNTG-3'(E box). Can bind individually to the promoter as a homodimer or synergistically as a heterodimer with BZR2/BES1. Does not itself activate transcription but enhances BZR2/BES1-mediated target gene activation. This chain is Transcription factor BIM1 (BIM1), found in Arabidopsis thaliana (Mouse-ear cress).